Consider the following 210-residue polypeptide: Cytochrome c4 (210 aa).

The first 20 residues, 1-20 (MNKALVTLLLTLGITGLAHA), serve as a signal peptide directing secretion. Heme c-binding residues include Cys34, Cys37, His38, Met86, Cys139, Cys142, His143, and Met187.

Binds 2 heme c groups covalently per subunit.

It is found in the periplasm. In terms of biological role, diheme, high potential cytochrome c believed to be an intermediate electron donor to terminal oxidation systems. This Azotobacter vinelandii protein is Cytochrome c4 (cycA).